Here is a 240-residue protein sequence, read N- to C-terminus: Methylthioribulose-1-phosphate dehydratase (240 aa).

Substrate is bound at residue Cys-99. Positions 116 and 118 each coordinate Zn(2+). Catalysis depends on Glu-145, which acts as the Proton donor/acceptor. His-201 contributes to the Zn(2+) binding site.

Belongs to the aldolase class II family. MtnB subfamily. Zn(2+) is required as a cofactor.

It localises to the cytoplasm. The enzyme catalyses 5-(methylsulfanyl)-D-ribulose 1-phosphate = 5-methylsulfanyl-2,3-dioxopentyl phosphate + H2O. It participates in amino-acid biosynthesis; L-methionine biosynthesis via salvage pathway; L-methionine from S-methyl-5-thio-alpha-D-ribose 1-phosphate: step 2/6. Functionally, catalyzes the dehydration of methylthioribulose-1-phosphate (MTRu-1-P) into 2,3-diketo-5-methylthiopentyl-1-phosphate (DK-MTP-1-P). The protein is Methylthioribulose-1-phosphate dehydratase of Paracoccidioides brasiliensis (strain Pb18).